A 226-amino-acid chain; its full sequence is Acyl-protein thioesterase 1 homolog 1 (226 aa).

Residues serine 121, aspartate 174, and histidine 206 each act as charge relay system in the active site.

Belongs to the AB hydrolase superfamily. AB hydrolase 2 family.

The protein resides in the cytoplasm. The protein localises to the nucleus. The catalysed reaction is S-hexadecanoyl-L-cysteinyl-[protein] + H2O = L-cysteinyl-[protein] + hexadecanoate + H(+). Functionally, hydrolyzes fatty acids from S-acylated cysteine residues in proteins with a strong preference for palmitoylated G-alpha proteins over other acyl substrates. Mediates the deacylation of G-alpha proteins such as GPA1 in vivo, but has weak or no activity toward palmitoylated Ras proteins. Has weak lysophospholipase activity in vitro; however such activity may not exist in vivo. This Dictyostelium discoideum (Social amoeba) protein is Acyl-protein thioesterase 1 homolog 1.